Consider the following 581-residue polypeptide: ATP-dependent lipid A-core flippase (581 aa).

Transmembrane regions (helical) follow at residues 15 to 35 (LWPIVSPFRIGLIVAAVALIL), 68 to 88 (LIVIALMIMRGLSGFVSSYCI), 152 to 172 (IIGLFVLMFYYSWQLSLILIV), 252 to 272 (PIIQLIASFALAFVLYAASFP), and 274 to 294 (IMETLTAGKITVVFSSMIALM). Residues 27–309 (IVAAVALILN…LTNVNAQFQR (283 aa)) enclose the ABC transmembrane type-1 domain. In terms of domain architecture, ABC transporter spans 341–577 (IEFRNVTFCY…NGVYSQLHRM (237 aa)). 375–382 (GRSGSGKS) is an ATP binding site.

The protein belongs to the ABC transporter superfamily. Lipid exporter (TC 3.A.1.106) family. As to quaternary structure, homodimer.

The protein localises to the cell inner membrane. The enzyme catalyses ATP + H2O + lipid A-core oligosaccharideSide 1 = ADP + phosphate + lipid A-core oligosaccharideSide 2.. In terms of biological role, involved in lipopolysaccharide (LPS) biosynthesis. Translocates lipid A-core from the inner to the outer leaflet of the inner membrane. Transmembrane domains (TMD) form a pore in the inner membrane and the ATP-binding domain (NBD) is responsible for energy generation. The chain is ATP-dependent lipid A-core flippase from Photorhabdus laumondii subsp. laumondii (strain DSM 15139 / CIP 105565 / TT01) (Photorhabdus luminescens subsp. laumondii).